The primary structure comprises 521 residues: Myocyte-specific enhancer factor 2D (521 aa).

The 55-residue stretch at Arg-3–Tyr-57 folds into the MADS-box domain. The mef2-type DNA-binding region spans Ala-58–Glu-86. Residues Ser-98, Ser-106, and Ser-110 each carry the phosphoserine modification. Ser-121 carries the post-translational modification Phosphoserine; by PKA. The interval Thr-174–Gly-207 is disordered. The residue at position 180 (Ser-180) is a Phosphoserine; by MAPK7. The segment covering Ser-180–Ser-192 has biased composition (polar residues). A Phosphoserine; by PKA modification is found at Ser-190. Ser-231 bears the Phosphoserine mark. The disordered stretch occupies residues Asn-244–Arg-266. Lys-245 carries the N6-acetyllysine modification. Residue Ser-251 is modified to Phosphoserine. Positions Thr-286–Leu-292 are beta domain. 2 disordered regions span residues Ser-357–Leu-407 and Ser-437–Lys-521. A compositionally biased stretch (pro residues) spans Pro-373–Pro-400. At Lys-439 the chain carries N6-acetyllysine; alternate. Lys-439 is covalently cross-linked (Glycyl lysine isopeptide (Lys-Gly) (interchain with G-Cter in SUMO); alternate). At Ser-444 the chain carries Phosphoserine.

Belongs to the MEF2 family. As to quaternary structure, interacts with MYOG. Forms a complex with class II HDACs in undifferentiating cells. On myogenic differentiation, HDACs are released into the cytoplasm allowing MEF2s to interact with other proteins for activation. Interacts with HDAC4 (in undifferentiating cells); the interaction translocates MEF2D to nuclear dots. Forms a heterodimer with MEF2A. Interacts with MAPK7; the interaction phosphorylates but does not activate MEF2D. Interacts with CCAR2 and HDAC3. Phosphorylated on Ser-444 by CDK5 is required for Lys-439 sumoylation and inhibits transcriptional activity. In neurons, enhanced CDK5 activity induced by neurotoxins promotes caspase 3-mediated cleavage leading to neuron apoptosis. Phosphorylation on Ser-180 can be enhanced by EGF. Phosphorylated and activated by CaMK4. In terms of processing, acetylated on Lys-439 by CREBBP. Acetylated by EP300. Deacetylated by SIRT1 and HDAC3. Post-translationally, sumoylated on Lys-439 with SUMO2 but not SUMO1; which inhibits transcriptional activity and myogenic activity. Desumoylated by SENP3. Proteolytically cleaved in cerebellar granule neurons on several sites by caspase 7 following neurotoxicity. Preferentially cleaves the CDK5-mediated hyperphosphorylated form which leads to neuron apoptosis and transcriptional inactivation.

It is found in the nucleus. Functionally, transcriptional activator which binds specifically to the MEF2 element, 5'-YTA[AT](4)TAR-3', found in numerous muscle-specific, growth factor- and stress-induced genes. Mediates cellular functions not only in skeletal and cardiac muscle development, but also in neuronal differentiation and survival. Plays diverse roles in the control of cell growth, survival and apoptosis via p38 MAPK signaling in muscle-specific and/or growth factor-related transcription. Plays a critical role in the regulation of neuronal apoptosis. The chain is Myocyte-specific enhancer factor 2D (MEF2D) from Homo sapiens (Human).